The chain runs to 334 residues: tRNA N6-adenosine threonylcarbamoyltransferase (334 aa).

Fe cation contacts are provided by His-112 and His-116. Substrate is bound by residues 135-139 (VVSGG), Asp-168, Gly-181, Asp-185, and Asn-274. Asp-303 serves as a coordination point for Fe cation.

It belongs to the KAE1 / TsaD family. It depends on Fe(2+) as a cofactor.

It localises to the cytoplasm. It catalyses the reaction L-threonylcarbamoyladenylate + adenosine(37) in tRNA = N(6)-L-threonylcarbamoyladenosine(37) in tRNA + AMP + H(+). Functionally, required for the formation of a threonylcarbamoyl group on adenosine at position 37 (t(6)A37) in tRNAs that read codons beginning with adenine. Is involved in the transfer of the threonylcarbamoyl moiety of threonylcarbamoyl-AMP (TC-AMP) to the N6 group of A37, together with TsaE and TsaB. TsaD likely plays a direct catalytic role in this reaction. The sequence is that of tRNA N6-adenosine threonylcarbamoyltransferase from Anaeromyxobacter dehalogenans (strain 2CP-C).